The following is a 970-amino-acid chain: Protein CLASP-3 (970 aa).

2 disordered regions span residues 314–377 (SRLA…QKAR) and 651–675 (NGISSGSGGSGNNHPKATPLRETPH). Over residues 344-355 (GSRTRTSSITSN) the composition is skewed to polar residues. The stretch at 905–943 (ITPCVIKAYQSTSSSVRKTVVYCLVAMVNRVGEQRMAPH) is one HEAT repeat.

It belongs to the CLASP family.

The protein resides in the cytoplasm. Its subcellular location is the cytoskeleton. In terms of biological role, microtubule plus-end tracking protein that promotes the stabilization of dynamic microtubules. In Caenorhabditis briggsae, this protein is Protein CLASP-3 (cls-3).